Reading from the N-terminus, the 113-residue chain is Protein FMC1 homolog (113 aa).

Residues serine 94–proline 113 form a disordered region.

It belongs to the FMC1 family. Interacts with ATPAF2.

Its subcellular location is the mitochondrion. Functionally, plays a role in the assembly/stability of the mitochondrial membrane ATP synthase (F(1)F(0) ATP synthase or Complex V). In Homo sapiens (Human), this protein is Protein FMC1 homolog.